A 455-amino-acid polypeptide reads, in one-letter code: Proline--tRNA ligase (455 aa).

L-proline-binding residues include T101, E103, and R132. R132, E134, Q216, and T219 together coordinate ATP. Residue H221 coordinates L-proline. Residues S253 and R255 each coordinate ATP. The segment at 329–359 (EIKGVPLRIEVGPKDIENKKITLFRRDTMEK) is interaction with tRNA.

It belongs to the class-II aminoacyl-tRNA synthetase family. ProS type 3 subfamily. Homodimer. The dimer is functionally asymmetric: only one of the two active sites at a time is able to form prolyl-adenylate, and only one tRNA molecule binds per dimer.

Its subcellular location is the cytoplasm. The enzyme catalyses tRNA(Pro) + L-proline + ATP = L-prolyl-tRNA(Pro) + AMP + diphosphate. Inhibited by high concentrations of prolinamide. Catalyzes the attachment of proline to tRNA(Pro) in a two-step reaction: proline is first activated by ATP to form Pro-AMP and then transferred to the acceptor end of tRNA(Pro). Can inadvertently accommodate and process non-cognate amino acids such as cysteine and alanine. In Methanocaldococcus jannaschii (strain ATCC 43067 / DSM 2661 / JAL-1 / JCM 10045 / NBRC 100440) (Methanococcus jannaschii), this protein is Proline--tRNA ligase (proS).